The sequence spans 142 residues: Pro-Viral epidermal growth factor (142 aa).

The first 19 residues, 1-19 (MSIKYLMLLFAAMIIRSLA), serve as a signal peptide directing secretion. At 20 to 104 (DSGNAIETTS…DTTTSYIPSL (85 aa)) the chain is on the extracellular side. N34 carries an N-linked (GlcNAc...) asparagine; by host glycan. A disulfide bridge links C71 with C80. The helical transmembrane segment at 105–125 (GIVLVLVGIIITCCLLSVYMF) threads the bilayer. The Cytoplasmic portion of the chain corresponds to 126–142 (TRRTKLPIQDMVVLYFL).

The protein belongs to the orthopoxvirus OPG019 family. As to quaternary structure, interacts with host EGFR. In terms of processing, cleaved at the cell surface by host ADAM10, thereby releasing the secreted form of VGF.

Its subcellular location is the host membrane. The protein localises to the secreted. Stimulates cellular proliferation (hyperplasia)and mobility around infected cells to promote rapid and efficient spread of infection. This effect is beneficial for virus replication in vivo, because poxviruses replicate possibly better in proliferating cells than in quiescent cells. Acts by binding host EGFR, inducing its dimerization, autophosphorylation and leading to activation of several cellular pathways regulating cell proliferation or cell survival. The activation by host EGFR of mitogen activated protein kinases (MAPK) and extracellular-signal regulated kinases (ERK) are essential for the positive effect of vaccinia growth factor on poxvirus virulence in vivo. The protein is Pro-Viral epidermal growth factor (OPG019) of Cynomys gunnisoni (Gunnison's prairie dog).